The chain runs to 475 residues: UDP-N-acetylmuramoylalanine--D-glutamate ligase (475 aa).

Residue 130–136 (GTNGKTT) participates in ATP binding.

The protein belongs to the MurCDEF family.

It localises to the cytoplasm. The enzyme catalyses UDP-N-acetyl-alpha-D-muramoyl-L-alanine + D-glutamate + ATP = UDP-N-acetyl-alpha-D-muramoyl-L-alanyl-D-glutamate + ADP + phosphate + H(+). The protein operates within cell wall biogenesis; peptidoglycan biosynthesis. Cell wall formation. Catalyzes the addition of glutamate to the nucleotide precursor UDP-N-acetylmuramoyl-L-alanine (UMA). The chain is UDP-N-acetylmuramoylalanine--D-glutamate ligase from Corynebacterium diphtheriae (strain ATCC 700971 / NCTC 13129 / Biotype gravis).